Here is a 2150-residue protein sequence, read N- to C-terminus: A disintegrin and metalloproteinase with thrombospondin motifs gon-1 (2150 aa).

The signal sequence occupies residues 1–28 (MRSIGGSFHLLQPVVAALILLVVCLVYA). The propeptide occupies 29–273 (LQSGSGTISE…VIERKARSRR (245 aa)). Residues N134, N213, N243, and N248 are each glycosylated (N-linked (GlcNAc...) asparagine). The Peptidase M12B domain occupies 280–493 (HYVEVLVVAD…GQTQCLFDQP (214 aa)). 2 disulfide bridges follow: C402–C488 and C440–C470. A Zn(2+)-binding site is contributed by H424. Residue E425 is part of the active site. Zn(2+) is bound by residues H428 and H434. The region spanning 503–587 (FVRDEPGKKY…RLAPESLTKI (85 aa)) is the Disintegrin domain. Residues 588 to 643 (DGQWGDWRSWGECSRTCGGGVQKGLRDCDSPKPRNGGKYCVGQRERYRSCNTQECP) enclose the TSP type-1 1 domain. Disulfide bonds link C600/C637, C604/C642, and C615/C627. The N-linked (GlcNAc...) asparagine glycan is linked to N842. TSP type-1 domains are found at residues 943 to 1003 (CSTR…IDCS), 1004 to 1057 (GRKW…RECN), 1060 to 1115 (PCPR…HACT), 1116 to 1165 (WWQF…KPCH), 1168 to 1227 (SCPK…GTCP), 1228 to 1277 (FWRN…QTCH), 1280 to 1339 (PCTS…DTCD), 1352 to 1409 (PPIR…RDCS), 1410 to 1469 (YWKM…EPCP), 1474 to 1524 (HIGS…ELCP), and 1527 to 1585 (TNNS…PPCR). Residues N1139 and N1199 are each glycosylated (N-linked (GlcNAc...) asparagine). N-linked (GlcNAc...) asparagine glycans are attached at residues N1370 and N1432. N-linked (GlcNAc...) asparagine glycosylation is found at N1528, N1590, N1606, and N1654. The disordered stretch occupies residues 1590–1614 (NKTSSASMTSLSSSNSNTTSSASAS). Residues 1592-1614 (TSSASMTSLSSSNSNTTSSASAS) are compositionally biased toward low complexity. TSP type-1 domains are found at residues 1621 to 1675 (PVVS…VRCR), 1678 to 1736 (HCPR…VACP), 1737 to 1793 (AYRW…DTSN), 1794 to 1866 (CPYE…NPCD), and 1867 to 1924 (SEFK…RNCL). 6 disulfides stabilise this stretch: C1679–C1718, C1690–C1694, C1690–C1730, C1694–C1735, C1705–C1718, and C1730–C1735. N1828 and N1855 each carry an N-linked (GlcNAc...) asparagine glycan. The region spanning 1924–2123 (LPSTCQELKS…RYKGLIFEVN (200 aa)) is the GON domain. 3 N-linked (GlcNAc...) asparagine glycosylation sites follow: N1942, N1960, and N1997.

Requires Zn(2+) as cofactor. Expressed by the gonadal distal tip cells (DTCs). Expressed in muscles, including body wall, vulval and anal depressor muscles. Expressed in motor neurons and in ASI and ASJ neurons.

The protein localises to the secreted. The protein resides in the extracellular space. It localises to the extracellular matrix. It is found in the basement membrane. Its subcellular location is the endoplasmic reticulum. The protein localises to the golgi apparatus. Its function is as follows. Secreted metalloprotease required for distal tip cell (DTC) migration along the body wall basement membranes, a key step that promotes gonad morphogenesis. Probably acts by remodeling the basement membrane during cell migration. Required to restrict presynaptic growth at the neuromuscular junctions (NMJ) in late larval stage and in adult motor neurons, probably by controlling collagen IV emb-9 degradation, a component of the synapse basement membrane. Also involved in the organization of adult muscle morphology. Has a protease-independent function in promoting the transport from the endoplasmic reticulum to the Golgi apparatus of a variety of secretory cargos. Required for the secretion of insulin-like peptide ins-7, daf-28 and ins-18 and TGF beta-like protein daf-7. In peripheral tissues, negatively regulates insulin-mediated daf-16 translocation and thereby negatively regulates lifespan and dauer formation. This Caenorhabditis elegans protein is A disintegrin and metalloproteinase with thrombospondin motifs gon-1.